Here is a 704-residue protein sequence, read N- to C-terminus: Phytyl ester synthase 1, chloroplastic (704 aa).

The transit peptide at 1-27 (MATCSSSLLVLPNLRLSSNQRRNFKVR) directs the protein to the chloroplast.

It belongs to the diacylglycerol acyltransferase family. As to quaternary structure, interacts with PGM48. In terms of tissue distribution, mostly expressed in flowers (e.g. sepals, petals and stamen).

Its subcellular location is the plastid. The protein resides in the chloroplast. The protein localises to the plastoglobule. It catalyses the reaction a 1,2-diacyl-3-O-(beta-D-galactosyl)-sn-glycerol + a 1,2-diacylglycerol = an acyl-3-O-(beta-D-galactosyl)-sn-glycerol + a triacylglycerol. The catalysed reaction is a 1,2-diacylglycerol + a fatty acyl-CoA = a triacylglycerol + CoA. It carries out the reaction a fatty acyl-[ACP] + a 1,2-diacylglycerol = a triacylglycerol + holo-[ACP]. The enzyme catalyses phytol + a fatty acyl-CoA = a fatty acid phytyl ester + CoA. It catalyses the reaction phytol + tetradecanoyl-CoA = tetradecanoate phytyl ester + CoA. The catalysed reaction is a 1,3-diacylglycerol + a fatty acyl-CoA = a triacylglycerol + CoA. It carries out the reaction 1,2-dihexanoylglycerol + tetradecanoyl-CoA = 1,2-dihexanoyl-3-tetradecanoylglycerol + CoA. The enzyme catalyses 1,2-dihexanoylglycerol + hexadecanoyl-CoA = 1,2-dihexanoyl-3-hexadecanoylglycerol + CoA. It catalyses the reaction 1,2-dihexanoylglycerol + octadecanoyl-CoA = 1,2-dihexanoyl-3-octadecanoylglycerol + CoA. The catalysed reaction is (7Z,10Z,13Z)-hexadecatrienoyl-CoA + 1,2-dihexanoylglycerol = 1,2-dihexanoyl-3-(7Z,10Z,13Z-hexadecatrienoyl)-glycerol + CoA. It carries out the reaction 1,2-dihexanoylglycerol + (9Z)-octadecenoyl-CoA = 1,2-dihexanoyl-3-(9Z-octadecenoyl)-glycerol + CoA. The enzyme catalyses 1,2-dihexanoylglycerol + (9Z,12Z,15Z)-octadecatrienoyl-CoA = 1,2-dihexanoyl-3-(9Z,12Z,15Z-octadecatrienoyl)-glycerol + CoA. It catalyses the reaction phytol + decanoyl-CoA = decanoate phytyl ester + CoA. The catalysed reaction is (7Z,10Z,13Z)-hexadecatrienoyl-CoA + phytol = (7Z,10Z,13Z)-hexadecatrienoate phytyl ester + CoA. It carries out the reaction phytol + dodecanoyl-CoA = dodecanoate phytyl ester + CoA. Functionally, acyltransferase involved in fatty acid phytyl ester synthesis in chloroplasts, a process required for the maintenance of the photosynthetic membrane integrity during abiotic stress and senescence. Exhibits phytyl ester synthesis and diacylglycerol acyltransferase activities with broad substrate specificities, and can employ acyl-CoAs, acyl carrier proteins, and galactolipids as acyl donors. This chain is Phytyl ester synthase 1, chloroplastic, found in Arabidopsis thaliana (Mouse-ear cress).